We begin with the raw amino-acid sequence, 253 residues long: Phosphate import ATP-binding protein PstB 1 (253 aa).

Residues 7 to 248 (LTVSDLSLYY…PEKQETSDYI (242 aa)) enclose the ABC transporter domain. 39-46 (GPSGCGKS) is a binding site for ATP.

This sequence belongs to the ABC transporter superfamily. Phosphate importer (TC 3.A.1.7) family. As to quaternary structure, the complex is composed of two ATP-binding proteins (PstB), two transmembrane proteins (PstC and PstA) and a solute-binding protein (PstS).

The protein resides in the cell membrane. The catalysed reaction is phosphate(out) + ATP + H2O = ADP + 2 phosphate(in) + H(+). In terms of biological role, part of the ABC transporter complex PstSACB involved in phosphate import. Responsible for energy coupling to the transport system. The sequence is that of Phosphate import ATP-binding protein PstB 1 from Lactococcus lactis subsp. lactis (strain IL1403) (Streptococcus lactis).